Reading from the N-terminus, the 433-residue chain is 3-phosphoshikimate 1-carboxyvinyltransferase (433 aa).

The 3-phosphoshikimate site is built by K23, S24, and R28. Residue K23 participates in phosphoenolpyruvate binding. Phosphoenolpyruvate-binding residues include G95 and R123. S170, S171, Q172, S198, D317, and K344 together coordinate 3-phosphoshikimate. Position 172 (Q172) interacts with phosphoenolpyruvate. Catalysis depends on D317, which acts as the Proton acceptor. Residues R348, R391, and K416 each contribute to the phosphoenolpyruvate site.

This sequence belongs to the EPSP synthase family. As to quaternary structure, monomer.

It is found in the cytoplasm. The enzyme catalyses 3-phosphoshikimate + phosphoenolpyruvate = 5-O-(1-carboxyvinyl)-3-phosphoshikimate + phosphate. It participates in metabolic intermediate biosynthesis; chorismate biosynthesis; chorismate from D-erythrose 4-phosphate and phosphoenolpyruvate: step 6/7. Catalyzes the transfer of the enolpyruvyl moiety of phosphoenolpyruvate (PEP) to the 5-hydroxyl of shikimate-3-phosphate (S3P) to produce enolpyruvyl shikimate-3-phosphate and inorganic phosphate. The chain is 3-phosphoshikimate 1-carboxyvinyltransferase from Neisseria meningitidis serogroup B (strain ATCC BAA-335 / MC58).